A 416-amino-acid chain; its full sequence is Nuclear hormone receptor family member nhr-59 (416 aa).

Residues 17–94 (QTFCQVCGQE…IGMDIQNFQF (78 aa)) constitute a DNA-binding region (nuclear receptor). 2 consecutive NR C4-type zinc fingers follow at residues 20-40 (CQVCGQESHGAHFGAITCRAC) and 57-82 (CKDGRGRCKILTNGRSCCKKCRLKKC). The 254-residue stretch at 162–415 (TRLQKLSSSL…FSHPELVKDV (254 aa)) folds into the NR LBD domain.

It belongs to the nuclear hormone receptor family.

It localises to the nucleus. Orphan nuclear receptor. The chain is Nuclear hormone receptor family member nhr-59 from Caenorhabditis elegans.